Reading from the N-terminus, the 635-residue chain is Threonine--tRNA ligase (635 aa).

Positions 1-58 constitute a TGS domain; that stretch reads MIHVTCNQEAFELPEGASAMDLANKMKQSHCFAGALINDQEKDLSTTLQDGDTVLFLT. The tract at residues 237 to 528 is catalytic; that stretch reads DHRVLGTKLD…LIEHFKGRFP (292 aa). Cys328, His379, and His505 together coordinate Zn(2+).

Belongs to the class-II aminoacyl-tRNA synthetase family. As to quaternary structure, homodimer. Requires Zn(2+) as cofactor.

The protein localises to the cytoplasm. The catalysed reaction is tRNA(Thr) + L-threonine + ATP = L-threonyl-tRNA(Thr) + AMP + diphosphate + H(+). In terms of biological role, catalyzes the attachment of threonine to tRNA(Thr) in a two-step reaction: L-threonine is first activated by ATP to form Thr-AMP and then transferred to the acceptor end of tRNA(Thr). Also edits incorrectly charged L-seryl-tRNA(Thr). This Chlamydia trachomatis serovar A (strain ATCC VR-571B / DSM 19440 / HAR-13) protein is Threonine--tRNA ligase.